Reading from the N-terminus, the 672-residue chain is tRNA 5-methylaminomethyl-2-thiouridine biosynthesis bifunctional protein MnmC (672 aa).

The segment at 1 to 235 (MTRVLEPAEP…KRDMTVARFA (235 aa)) is tRNA (mnm(5)s(2)U34)-methyltransferase. The interval 259–672 (IGAGLAGCAV…SAGPGVDAAG (414 aa)) is FAD-dependent cmnm(5)s(2)U34 oxidoreductase.

In the N-terminal section; belongs to the methyltransferase superfamily. tRNA (mnm(5)s(2)U34)-methyltransferase family. The protein in the C-terminal section; belongs to the DAO family. The cofactor is FAD.

The protein localises to the cytoplasm. The enzyme catalyses 5-aminomethyl-2-thiouridine(34) in tRNA + S-adenosyl-L-methionine = 5-methylaminomethyl-2-thiouridine(34) in tRNA + S-adenosyl-L-homocysteine + H(+). Functionally, catalyzes the last two steps in the biosynthesis of 5-methylaminomethyl-2-thiouridine (mnm(5)s(2)U) at the wobble position (U34) in tRNA. Catalyzes the FAD-dependent demodification of cmnm(5)s(2)U34 to nm(5)s(2)U34, followed by the transfer of a methyl group from S-adenosyl-L-methionine to nm(5)s(2)U34, to form mnm(5)s(2)U34. This is tRNA 5-methylaminomethyl-2-thiouridine biosynthesis bifunctional protein MnmC from Cupriavidus metallidurans (strain ATCC 43123 / DSM 2839 / NBRC 102507 / CH34) (Ralstonia metallidurans).